Here is a 262-residue protein sequence, read N- to C-terminus: Small ribosomal subunit protein eS4y (262 aa).

One can recognise an S4 RNA-binding domain in the interval Leu-42–Asp-104.

It belongs to the eukaryotic ribosomal protein eS4 family.

It is found in the cytoplasm. This chain is Small ribosomal subunit protein eS4y (RPS4B), found in Arabidopsis thaliana (Mouse-ear cress).